The following is a 317-amino-acid chain: Melanocyte-stimulating hormone receptor (317 aa).

The Extracellular segment spans residues 1–37; sequence MPLQGPQRRLLGSLNSTLPATPYLGLTTNQTEPPCLE. Residue asparagine 29 is glycosylated (N-linked (GlcNAc...) asparagine). The helical transmembrane segment at 38 to 63 threads the bilayer; the sequence is VSIPDGLFLSLGLVSLVENVLVVTAI. The Cytoplasmic portion of the chain corresponds to 64–72; the sequence is AKNRNLHSP. A helical membrane pass occupies residues 73–93; the sequence is MYYFICCLAVSDLLVSMSNVL. Over 94–118 the chain is Extracellular; the sequence is EMAILLLLEAGVLATQASVLQQLDN. A helical membrane pass occupies residues 119 to 140; that stretch reads IIDVLICGSMVSSLCFLGSIAV. Residues 141–163 lie on the Cytoplasmic side of the membrane; the sequence is DRYISIFYALRYHSIMMLPRVWR. Residues 164-183 form a helical membrane-spanning segment; it reads AIVAIWVVSVLSSTLFIAYY. Over 184-191 the chain is Extracellular; sequence NHTAVLLC. The chain crosses the membrane as a helical span at residues 192-211; it reads LVTFFVAMLVLMAVLYVHML. The Cytoplasmic segment spans residues 212 to 240; the sequence is ARACQHARGIARLHKRQHPIHQGFGLKGA. The chain crosses the membrane as a helical span at residues 241 to 266; it reads ATLTILLGVFFLCWGPFFLHLSLLIL. Residues 267–279 lie on the Extracellular side of the membrane; it reads CPQHPTCGCVFKN. A helical transmembrane segment spans residues 280–300; the sequence is FKLFLTLILCSAIVDPLIYAF. Residues 301–317 are Cytoplasmic-facing; that stretch reads RSQELRKTLQEVLLCSW. A lipid anchor (S-palmitoyl cysteine) is attached at cysteine 315.

The protein belongs to the G-protein coupled receptor 1 family. In terms of assembly, interacts with MGRN1, but does not undergo MGRN1-mediated ubiquitination; this interaction competes with GNAS-binding and thus inhibits agonist-induced cAMP production. Interacts with OPN3; the interaction results in a decrease in MC1R-mediated cAMP signaling and ultimately a decrease in melanin production in melanocytes.

It localises to the cell membrane. In terms of biological role, receptor for MSH (alpha, beta and gamma) and ACTH. The activity of this receptor is mediated by G proteins which activate adenylate cyclase. Mediates melanogenesis, the production of eumelanin (black/brown) and phaeomelanin (red/yellow), via regulation of cAMP signaling in melanocytes. The polypeptide is Melanocyte-stimulating hormone receptor (MC1R) (Equus caballus (Horse)).